The chain runs to 1706 residues: Brefeldin A-inhibited guanine nucleotide-exchange protein 4 (1706 aa).

One can recognise an SEC7 domain in the interval 555–742 (MLEQRRAYKI…GSLYDRVVKE (188 aa)). Residue E657 is part of the active site.

In terms of assembly, homodimer.

The protein resides in the cytoplasm. It is found in the cytosol. Its subcellular location is the membrane. With respect to regulation, inhibited by brefeldin A. Its function is as follows. Activates the ARF proteins by exchanging bound GDP for free GTP. Plays a role in vesicular protein sorting. In Arabidopsis thaliana (Mouse-ear cress), this protein is Brefeldin A-inhibited guanine nucleotide-exchange protein 4 (BIG4).